A 156-amino-acid polypeptide reads, in one-letter code: Small ribosomal subunit protein uS7 (156 aa).

Belongs to the universal ribosomal protein uS7 family. In terms of assembly, part of the 30S ribosomal subunit. Contacts proteins S9 and S11.

Its function is as follows. One of the primary rRNA binding proteins, it binds directly to 16S rRNA where it nucleates assembly of the head domain of the 30S subunit. Is located at the subunit interface close to the decoding center, probably blocks exit of the E-site tRNA. This is Small ribosomal subunit protein uS7 from Blochmanniella pennsylvanica (strain BPEN).